The primary structure comprises 258 residues: Ribosomal RNA small subunit methyltransferase J (258 aa).

Residues 111 to 112, 127 to 128, and aspartate 179 contribute to the S-adenosyl-L-methionine site; these read RD and ER.

It belongs to the methyltransferase superfamily. RsmJ family.

The protein resides in the cytoplasm. The catalysed reaction is guanosine(1516) in 16S rRNA + S-adenosyl-L-methionine = N(2)-methylguanosine(1516) in 16S rRNA + S-adenosyl-L-homocysteine + H(+). In terms of biological role, specifically methylates the guanosine in position 1516 of 16S rRNA. The sequence is that of Ribosomal RNA small subunit methyltransferase J from Alteromonas mediterranea (strain DSM 17117 / CIP 110805 / LMG 28347 / Deep ecotype).